The following is a 433-amino-acid chain: Isocitrate dehydrogenase [NADP], chloroplastic (433 aa).

The transit peptide at 1–21 directs the protein to the chloroplast; sequence QFSPNLSFSAFFPIITFTTAT. NADP(+)-binding positions include 98-100 and arginine 105; that span reads TIT. Threonine 100 is a substrate binding site. Residues 117 to 123, arginine 132, and arginine 155 each bind substrate; that span reads SPNGTIR. Aspartate 275 lines the Mn(2+) pocket. Lysine 283 lines the NADP(+) pocket. Aspartate 298 is a binding site for Mn(2+). NADP(+) contacts are provided by residues 333–338 and asparagine 351; that span reads GTVTRH.

This sequence belongs to the isocitrate and isopropylmalate dehydrogenases family. It depends on Mg(2+) as a cofactor. The cofactor is Mn(2+). As to expression, detected in all tissues examined.

The protein resides in the plastid. Its subcellular location is the chloroplast. The catalysed reaction is D-threo-isocitrate + NADP(+) = 2-oxoglutarate + CO2 + NADPH. This Medicago sativa (Alfalfa) protein is Isocitrate dehydrogenase [NADP], chloroplastic.